Here is a 244-residue protein sequence, read N- to C-terminus: 5-oxoprolinase subunit A (244 aa).

Belongs to the LamB/PxpA family. In terms of assembly, forms a complex composed of PxpA, PxpB and PxpC.

It carries out the reaction 5-oxo-L-proline + ATP + 2 H2O = L-glutamate + ADP + phosphate + H(+). Functionally, catalyzes the cleavage of 5-oxoproline to form L-glutamate coupled to the hydrolysis of ATP to ADP and inorganic phosphate. The polypeptide is 5-oxoprolinase subunit A (Escherichia coli O6:K15:H31 (strain 536 / UPEC)).